The following is a 239-amino-acid chain: Ribose-5-phosphate isomerase A (239 aa).

Residues 31 to 34, 88 to 91, and 101 to 104 contribute to the substrate site; these read FGST, DGAD, and KGGG. Glu110 (proton acceptor) is an active-site residue. Lys128 contributes to the substrate binding site.

This sequence belongs to the ribose 5-phosphate isomerase family. In terms of assembly, homodimer.

The enzyme catalyses aldehydo-D-ribose 5-phosphate = D-ribulose 5-phosphate. Its pathway is carbohydrate degradation; pentose phosphate pathway; D-ribose 5-phosphate from D-ribulose 5-phosphate (non-oxidative stage): step 1/1. Catalyzes the reversible conversion of ribose-5-phosphate to ribulose 5-phosphate. In Chloroflexus aurantiacus (strain ATCC 29366 / DSM 635 / J-10-fl), this protein is Ribose-5-phosphate isomerase A.